The primary structure comprises 335 residues: Rho guanine nucleotide exchange factor 39 (335 aa).

The 176-residue stretch at 22–197 folds into the DH domain; the sequence is KRACTARELL…SETAQRVHTI (176 aa). In terms of domain architecture, PH spans 227 to 331; that stretch reads WFLRQGWLLV…WYHSLTWAIS (105 aa).

As to expression, strongly expressed in hepatocellular carcinoma (HCC) compared with their non-cancerous counterparts.

The protein resides in the cell membrane. Functionally, promotes cell proliferation. This Homo sapiens (Human) protein is Rho guanine nucleotide exchange factor 39 (ARHGEF39).